The sequence spans 410 residues: Cytochrome P450(MEG) (410 aa).

Residue Cys-355 coordinates heme.

This sequence belongs to the cytochrome P450 family. It depends on heme as a cofactor.

It localises to the cytoplasm. The catalysed reaction is reduced 2[4Fe-4S]-[ferredoxin] + progesterone + O2 + 2 H(+) = 15beta-hydroxyprogesterone + oxidized 2[4Fe-4S]-[ferredoxin] + H2O. Has the capacity to hydroxylate certain steroids in the 15-beta position. Also hydroxylates progesterone in the 11-alpha and 9-beta position. The chain is Cytochrome P450(MEG) (cyp106A2) from Priestia megaterium (Bacillus megaterium).